The sequence spans 544 residues: Cytochrome P450 monooxygenase notG' (544 aa).

An N-terminal signal peptide occupies residues 1-22; sequence MELPFSAMSLLYLLVGIAGVIS. 2 helical membrane-spanning segments follow: residues 42–62 and 66–86; these read WYTL…GLPL and AKAT…SLLL. N-linked (GlcNAc...) asparagine glycosylation is found at asparagine 226 and asparagine 404. Residue cysteine 487 participates in heme binding.

The protein belongs to the cytochrome P450 family. Heme serves as cofactor.

Its subcellular location is the membrane. The protein operates within alkaloid biosynthesis. In terms of biological role, cytochrome P450 monooxygenase; part of the gene cluster that mediates the biosynthesis of notoamide, a fungal indole alkaloid that belongs to a family of natural products containing a characteristic bicyclo[2.2.2]diazaoctane core. The first step of notoamide biosynthesis involves coupling of L-proline and L-tryptophan by the bimodular NRPS notE', to produce cyclo-L-tryptophan-L-proline called brevianamide F. The reverse prenyltransferase notF' then acts as a deoxybrevianamide E synthase and converts brevianamide F to deoxybrevianamide E via reverse prenylation at C-2 of the indole ring leading to the bicyclo[2.2.2]diazaoctane core. Deoxybrevianamide E is further hydroxylated at C-6 of the indole ring, likely catalyzed by the cytochrome P450 monooxygenase notG', to yield 6-hydroxy-deoxybrevianamide E. 6-hydroxy-deoxybrevianamide E is a specific substrate of the prenyltransferase notC' for normal prenylation at C-7 to produce 6-hydroxy-7-prenyl-deoxybrevianamide, also called notoamide S. As the proposed pivotal branching point in notoamide biosynthesis, notoamide S can be diverted to notoamide E through an oxidative pyran ring closure putatively catalyzed by either notH' cytochrome P450 monooxygenase or the notD' FAD-linked oxidoreductase. This step would be followed by an indole 2,3-epoxidation-initiated pinacol-like rearrangement catalyzed by the notB' FAD-dependent monooxygenase leading to the formation of notoamide C and notoamide D. On the other hand notoamide S is converted to notoamide T by notH' (or notD'), a bifunctional oxidase that also functions as the intramolecular Diels-Alderase responsible for generation of (-)-notoamide T. To generate antipodal (+)-notoaminide T, notH (or notD) in Aspergillus strain MF297-2 is expected to catalyze a Diels-Alder reaction leading to the opposite stereochemistry. The remaining oxidoreductase notD' (or notH') likely catalyzes the oxidative pyran ring formation to yield (-)-stephacidin A. The FAD-dependent monooxygenase notI' is highly similar to notB' and is predicted to catalyze a similar conversion from (-)-stephacidin A to (+)-notoamide B via the 2,3-epoxidation of (-)-stephacidin A followed by a pinacol-type rearrangement. Finally, it remains unclear which enzyme could be responsible for the final hydroxylation steps leading to notoamide A and sclerotiamide. The polypeptide is Cytochrome P450 monooxygenase notG' (Aspergillus versicolor).